The primary structure comprises 420 residues: Carbohydrate sulfotransferase 1 (420 aa).

Residue M1 is a topological domain, cytoplasmic. The helical; Signal-anchor for type II membrane protein transmembrane segment at 2–23 (QCSWKAVILLALVSIAIQYTAI) threads the bilayer. Residues 24–420 (RTFTAKPFHI…IEDKTFIPFL (397 aa)) lie on the Lumenal side of the membrane. A glycan (N-linked (GlcNAc...) asparagine) is linked at N64. 77–83 (TRSGSSF) is a binding site for 3'-phosphoadenylyl sulfate. 2 N-linked (GlcNAc...) asparagine glycosylation sites follow: N153 and N197. 242-250 (RDPRGILSS) provides a ligand contact to 3'-phosphoadenylyl sulfate. N-linked (GlcNAc...) asparagine glycosylation is found at N342 and N405.

The protein belongs to the sulfotransferase 1 family. Gal/GlcNAc/GalNAc subfamily.

It is found in the golgi apparatus membrane. The enzyme catalyses 3'-phosphoadenylyl sulfate + keratan = adenosine 3',5'-bisphosphate + keratan 6'-sulfate.. Functionally, sulfotransferase that utilizes 3'-phospho-5'-adenylyl sulfate (PAPS) as sulfonate donor to catalyze the transfer of sulfate to position 6 of galactose (Gal) residues of keratan. This Danio rerio (Zebrafish) protein is Carbohydrate sulfotransferase 1 (chst1).